Consider the following 286-residue polypeptide: Pyridoxal kinase PdxY (286 aa).

Residues Ser9 and 44 to 45 (TQ) each bind substrate. ATP contacts are provided by residues Asp111, Ala143, Glu148, Lys181, and 208–211 (RPLV). Asp223 is a binding site for substrate.

The protein belongs to the pyridoxine kinase family. PdxY subfamily. Homodimer. The cofactor is Mg(2+).

It carries out the reaction pyridoxal + ATP = pyridoxal 5'-phosphate + ADP + H(+). The protein operates within cofactor metabolism; pyridoxal 5'-phosphate salvage; pyridoxal 5'-phosphate from pyridoxal: step 1/1. In terms of biological role, pyridoxal kinase involved in the salvage pathway of pyridoxal 5'-phosphate (PLP). Catalyzes the phosphorylation of pyridoxal to PLP. The sequence is that of Pyridoxal kinase PdxY from Yersinia pestis bv. Antiqua (strain Antiqua).